Here is an 858-residue protein sequence, read N- to C-terminus: MSSLSTSFDSSSDLPRSKSVDNTAASMKTGKYPKLENYRQYSDAQPIRHEALALKVDETKDSRHKFSSSNGENSGVENGGYVEKTNISTSGRMDFEGEAEAEAVKRYQLRSFALLSSNARPSRLAKSETHQKQIHVESIAPSLPKNAALERGHDTALPAGTSSNRCNLEASSSARTFTSARKASLVSAIFETSAESEHGTHPKQAKLKRRTYSTISTHSSVNPTTLLTRTASQKSDMGNDTRRIKPLRMDSRVSFHSEISQASRDSQETEEDVCFPMFRLLHTRVNGVDFDELEEYAQISNAERNLSLANHQRHSERTYNHTDQDTGFTNSASTSGSSAALKYTPEISRTLEKNCSVNEMYVSENNESVREDDKPDLHPDVTFGRNKIEGEKEGNDSSYSRAYYTLQNTEYQIPSRFSFFRSESDETVHASDIPSLISEGQTFYELFKGGDPTWWLDCSCPTDDEMRCIAKTFGIHPLTAEDIRMQETREKVELFKSYYFVCFHTFENDKESENYLEPINVYIVVFRSGVLTFHFDPISHCANVRRRVRQLRDYVSVNSDWLCYALIDDITDSFAPVIQSIEYEADSIDDSVFMTRDMDFAAMLQRIGESRRKTMTLMRLLSGKADVIKMFAKRCQDETNGIGPVLKSQTNMVNLQAEQENVNQNNSNNQISLSNSYMQTTSQPRGDIALYLGDIQDHLLTMFQNLLAYEKIFSRSHANYLAQLQVESFNSNNKVTEMLGKVTMLGTMLVPLNVITGLFGMNVKVPGRNGSIAWWYGILGVLLLLAVISWFLASYWIKKIDPPATLNEAAGSGAKSVISSFLPKRDKRFNDDSKNGNARVGVRRKSTVSLPSRYSRYN.

The span at 1–14 shows a compositional bias: low complexity; that stretch reads MSSLSTSFDSSSDL. Disordered stretches follow at residues 1–81, 318–337, and 365–396; these read MSSL…NGGY, TYNH…TSGS, and NNES…EGND. The Cytoplasmic segment spans residues 1–741; sequence MSSLSTSFDS…NNKVTEMLGK (741 aa). The segment covering 46 to 61 has biased composition (basic and acidic residues); it reads PIRHEALALKVDETKD. The segment covering 67 to 81 has biased composition (low complexity); the sequence is SSSNGENSGVENGGY. 2 stretches are compositionally biased toward basic and acidic residues: residues 367-379 and 386-395; these read ESVR…DLHP and NKIEGEKEGN. A helical membrane pass occupies residues 742-762; it reads VTMLGTMLVPLNVITGLFGMN. The Extracellular segment spans residues 763-771; the sequence is VKVPGRNGS. Residues 772 to 792 form a helical membrane-spanning segment; sequence IAWWYGILGVLLLLAVISWFL. Residues 793–858 lie on the Cytoplasmic side of the membrane; sequence ASYWIKKIDP…SLPSRYSRYN (66 aa).

The protein belongs to the CorA metal ion transporter (MIT) (TC 1.A.35) family.

Its subcellular location is the cell membrane. In terms of biological role, plasma membrane magnesium transporter. The polypeptide is Magnesium transporter ALR2 (ALR2) (Saccharomyces cerevisiae (strain ATCC 204508 / S288c) (Baker's yeast)).